Reading from the N-terminus, the 449-residue chain is UDP-N-acetylmuramate--L-alanine ligase (449 aa).

121-127 contributes to the ATP binding site; the sequence is GAHGKSS.

The protein belongs to the MurCDEF family.

Its subcellular location is the cytoplasm. The catalysed reaction is UDP-N-acetyl-alpha-D-muramate + L-alanine + ATP = UDP-N-acetyl-alpha-D-muramoyl-L-alanine + ADP + phosphate + H(+). Its pathway is cell wall biogenesis; peptidoglycan biosynthesis. Functionally, cell wall formation. This is UDP-N-acetylmuramate--L-alanine ligase from Helicobacter pylori (strain HPAG1).